The chain runs to 33 residues: Vejocalcin (33 aa).

Cystine bridges form between Cys3-Cys17, Cys10-Cys21, and Cys16-Cys32. Residues 23 to 24 are essential for stimulation of [3H]ryanodine binding to RYR1; sequence RR.

In terms of tissue distribution, expressed by the venom gland.

The protein resides in the secreted. In terms of biological role, this toxin stabilizes ryanodine receptor 1 (RyR1) opening in a long-lasting subconductance state (60% of the full conductance state). Furthermore, it triggers calcium release from sarcoplasmic vesicles (31 nM are enough to induce a sharp release, and 65% of the total calcium is released after toxin (100 nM) addition) probably by acting as a cell-penetrating peptide (CPP). In addition, it has been shown to dose-dependently stimulate ryanodine binding to RyR1 (EC(50)=3.7 nM). It also augments the bell-shaped calcium-[3H]ryanodine binding curve that is maximal at about 10 uM calcium concentration. It binds a different site as ryanodine. It acts synergistically with caffeine. In vivo, intracerebroventricular injection into mice induces neurotoxic symptoms, followed by death. The sequence is that of Vejocalcin from Vaejovis mexicanus (Mexican scorpion).